We begin with the raw amino-acid sequence, 372 residues long: AA9 family lytic polysaccharide monooxygenase C (372 aa).

Positions 1–16 (MFRSALFLLLAPLALS) are cleaved as a signal peptide. Cu(2+)-binding residues include His17 and His99. Residues Cys59 and Cys189 are joined by a disulfide bond. O2 is bound by residues His174 and Gln184. Cu(2+) is bound at residue Tyr186.

Belongs to the polysaccharide monooxygenase AA9 family. The cofactor is Cu(2+).

The protein localises to the secreted. It catalyses the reaction [(1-&gt;4)-beta-D-glucosyl]n+m + reduced acceptor + O2 = 4-dehydro-beta-D-glucosyl-[(1-&gt;4)-beta-D-glucosyl]n-1 + [(1-&gt;4)-beta-D-glucosyl]m + acceptor + H2O.. In terms of biological role, lytic polysaccharide monooxygenase (LPMO) that depolymerizes crystalline and amorphous polysaccharides via the oxidation of scissile alpha- or beta-(1-4)-glycosidic bonds, yielding C1 or C4 oxidation products. Catalysis by LPMOs requires the reduction of the active-site copper from Cu(II) to Cu(I) by a reducing agent and H(2)O(2) or O(2) as a cosubstrate. This is AA9 family lytic polysaccharide monooxygenase C from Aspergillus tamarii.